We begin with the raw amino-acid sequence, 121 residues long: Large ribosomal subunit protein bL19 (121 aa).

It belongs to the bacterial ribosomal protein bL19 family.

This protein is located at the 30S-50S ribosomal subunit interface and may play a role in the structure and function of the aminoacyl-tRNA binding site. The sequence is that of Large ribosomal subunit protein bL19 from Borreliella burgdorferi (strain ZS7) (Borrelia burgdorferi).